The chain runs to 260 residues: NAD-dependent protein deacetylase (260 aa).

Residues 9–260 (DDIDGETLDA…QVLPAIVERL (252 aa)) form the Deacetylase sirtuin-type domain. Ala-35, Thr-39, Phe-46, Arg-47, Gln-114, Ile-116, Asp-117, and His-132 together coordinate NAD(+). Phe-46 is a binding site for nicotinamide. The nicotinamide site is built by Ile-116 and Asp-117. The active-site Proton acceptor is His-132. Positions 140, 143, 166, and 168 each coordinate Zn(2+). NAD(+) is bound by residues Ser-206, Ser-207, Asn-231, Asp-248, and Val-249.

This sequence belongs to the sirtuin family. Class U subfamily. Zn(2+) is required as a cofactor.

It is found in the cytoplasm. The catalysed reaction is N(6)-acetyl-L-lysyl-[protein] + NAD(+) + H2O = 2''-O-acetyl-ADP-D-ribose + nicotinamide + L-lysyl-[protein]. Its function is as follows. NAD-dependent protein deacetylase which modulates the activities of several enzymes which are inactive in their acetylated form. Deacetylates the N-terminal lysine residue of Alba, the major archaeal chromatin protein and that, in turn, increases Alba's DNA binding affinity, thereby repressing transcription. This Haloarcula marismortui (strain ATCC 43049 / DSM 3752 / JCM 8966 / VKM B-1809) (Halobacterium marismortui) protein is NAD-dependent protein deacetylase.